The primary structure comprises 103 residues: Large ribosomal subunit protein mL41 (103 aa).

This sequence belongs to the mitochondrion-specific ribosomal protein mL41 family. In terms of assembly, component of the mitochondrial large ribosomal subunit (mt-LSU). Mature N.crassa 74S mitochondrial ribosomes consist of a small (37S) and a large (54S) subunit. The 37S small subunit contains a 16S ribosomal RNA (16S mt-rRNA) and 32 different proteins. The 54S large subunit contains a 23S rRNA (23S mt-rRNA) and 42 different proteins.

It is found in the mitochondrion. In terms of biological role, component of the mitochondrial ribosome (mitoribosome), a dedicated translation machinery responsible for the synthesis of mitochondrial genome-encoded proteins, including at least some of the essential transmembrane subunits of the mitochondrial respiratory chain. The mitoribosomes are attached to the mitochondrial inner membrane and translation products are cotranslationally integrated into the membrane. The polypeptide is Large ribosomal subunit protein mL41 (mrpl27) (Neurospora crassa (strain ATCC 24698 / 74-OR23-1A / CBS 708.71 / DSM 1257 / FGSC 987)).